Consider the following 574-residue polypeptide: Methionine--tRNA ligase (574 aa).

A 'HIGH' region motif is present at residues 11-21 (PYINGIKHLGN). The Zn(2+) site is built by Cys-143, Cys-146, Cys-156, and Cys-159. The short motif at 345 to 349 (KFSTS) is the 'KMSKS' region element. Residue Thr-348 coordinates ATP.

The protein belongs to the class-I aminoacyl-tRNA synthetase family. MetG type 1 subfamily. Monomer. Zn(2+) serves as cofactor.

It is found in the cytoplasm. The enzyme catalyses tRNA(Met) + L-methionine + ATP = L-methionyl-tRNA(Met) + AMP + diphosphate. Its function is as follows. Is required not only for elongation of protein synthesis but also for the initiation of all mRNA translation through initiator tRNA(fMet) aminoacylation. This Streptomyces avermitilis (strain ATCC 31267 / DSM 46492 / JCM 5070 / NBRC 14893 / NCIMB 12804 / NRRL 8165 / MA-4680) protein is Methionine--tRNA ligase.